The chain runs to 728 residues: Nucleolar GTP-binding protein 2 (728 aa).

Methionine 1 is subject to N-acetylmethionine. The disordered stretch occupies residues 1–33; sequence MVKPKYKGRSTINRSAASTNPDRVQGAGGQNMR. Residues 10–22 show a composition bias toward polar residues; that stretch reads STINRSAASTNPD. Residues 207–368 enclose the CP-type G domain; sequence WGELYKVIDS…LIDCPGVVYP (162 aa). GTP is bound by residues 317 to 324 and 361 to 365; these read GYPNVGKS and DCPGV. Disordered stretches follow at residues 462–521, 538–595, and 636–728; these read PPNA…RNSE, VGPQ…DTKA, and YKEE…RQKQ. A compositionally biased stretch (low complexity) spans 480 to 489; the sequence is EVPTETTQNN. Over residues 498-520 the composition is skewed to basic and acidic residues; the sequence is EVERSDSITEKEPEGDCSQDRNS. Phosphoserine is present on serine 504. Residues 553-586 show a composition bias toward acidic residues; the sequence is SDLEDLESSGEEEEQEQEQPGEDAEEERSPDTQE. Over residues 718 to 728 the composition is skewed to basic residues; that stretch reads KHRRNKFRQKQ.

The protein belongs to the TRAFAC class YlqF/YawG GTPase family. NOG2 subfamily. Interacts with LYAR and RPL23A. Interacts with the nuclear importin-beta receptor and, at a lower extent, with importin-alpha.

The protein localises to the nucleus. The protein resides in the nucleolus. Its function is as follows. GTPase that associates with pre-60S ribosomal subunits in the nucleolus and is required for their nuclear export and maturation. May promote cell proliferation possibly by increasing p53/TP53 protein levels, and consequently those of its downstream product CDKN1A/p21, and decreasing RPL23A protein levels. The polypeptide is Nucleolar GTP-binding protein 2 (Gnl2) (Mus musculus (Mouse)).